The sequence spans 317 residues: Ribosomal protein L11 methyltransferase (317 aa).

S-adenosyl-L-methionine-binding residues include Thr158, Gly179, Asp201, and Asn244.

This sequence belongs to the methyltransferase superfamily. PrmA family.

It is found in the cytoplasm. The enzyme catalyses L-lysyl-[protein] + 3 S-adenosyl-L-methionine = N(6),N(6),N(6)-trimethyl-L-lysyl-[protein] + 3 S-adenosyl-L-homocysteine + 3 H(+). In terms of biological role, methylates ribosomal protein L11. This Streptococcus pyogenes serotype M18 (strain MGAS8232) protein is Ribosomal protein L11 methyltransferase.